A 142-amino-acid chain; its full sequence is Large ribosomal subunit protein uL11 (142 aa).

This sequence belongs to the universal ribosomal protein uL11 family. In terms of assembly, part of the ribosomal stalk of the 50S ribosomal subunit. Interacts with L10 and the large rRNA to form the base of the stalk. L10 forms an elongated spine to which L12 dimers bind in a sequential fashion forming a multimeric L10(L12)X complex. In terms of processing, one or more lysine residues are methylated.

In terms of biological role, forms part of the ribosomal stalk which helps the ribosome interact with GTP-bound translation factors. The chain is Large ribosomal subunit protein uL11 from Stenotrophomonas maltophilia (strain R551-3).